Reading from the N-terminus, the 190-residue chain is CASP-like protein 1E1 (190 aa).

The tract at residues 1–21 is disordered; sequence MEHESKTKMDGIEMEKGKKEN. Topologically, residues 1–28 are cytoplasmic; sequence MEHESKTKMDGIEMEKGKKENGSRKGVE. Residues 29 to 49 traverse the membrane as a helical segment; it reads ITMRVLALVLTMVAATVLGVA. Over 50-83 the chain is Extracellular; the sequence is KQTEVVPIKLIPTLPPLNVATTAKASYLSAFVYN. Residues 84–104 traverse the membrane as a helical segment; it reads ICANAIACGYTAISIMIVIIS. Residues 105–111 lie on the Cytoplasmic side of the membrane; it reads KGRRSKC. A helical transmembrane segment spans residues 112-132; that stretch reads LLMAVLIGDLMMVALLCSSTG. Residues 133–163 lie on the Extracellular side of the membrane; that stretch reads AAGAIGLMGRHGNKHVMWKKVCGVFGKFCNQ. Residues 164–184 traverse the membrane as a helical segment; it reads AAVSVAITLIASVVFMLLVVL. Over 185 to 190 the chain is Cytoplasmic; the sequence is DALKLP.

Belongs to the Casparian strip membrane proteins (CASP) family. In terms of assembly, homodimer and heterodimers.

It localises to the cell membrane. The chain is CASP-like protein 1E1 from Arabidopsis lyrata subsp. lyrata (Lyre-leaved rock-cress).